Here is a 72-residue protein sequence, read N- to C-terminus: Large ribosomal subunit protein uL29 (72 aa).

This sequence belongs to the universal ribosomal protein uL29 family.

This Chlamydia muridarum (strain MoPn / Nigg) protein is Large ribosomal subunit protein uL29 (rpmC).